We begin with the raw amino-acid sequence, 437 residues long: Phosphomethylpyrimidine synthase (437 aa).

Residues Asn69, Met98, Tyr127, His163, 185–187 (SRG), 226–229 (DACR), and Glu265 each bind substrate. His269 contacts Zn(2+). Substrate is bound at residue Tyr292. His333 contacts Zn(2+). Cys409, Cys412, and Cys416 together coordinate [4Fe-4S] cluster.

This sequence belongs to the ThiC family. [4Fe-4S] cluster serves as cofactor.

The enzyme catalyses 5-amino-1-(5-phospho-beta-D-ribosyl)imidazole + S-adenosyl-L-methionine = 4-amino-2-methyl-5-(phosphooxymethyl)pyrimidine + CO + 5'-deoxyadenosine + formate + L-methionine + 3 H(+). It functions in the pathway cofactor biosynthesis; thiamine diphosphate biosynthesis. Functionally, catalyzes the synthesis of the hydroxymethylpyrimidine phosphate (HMP-P) moiety of thiamine from aminoimidazole ribotide (AIR) in a radical S-adenosyl-L-methionine (SAM)-dependent reaction. In Clostridium novyi (strain NT), this protein is Phosphomethylpyrimidine synthase.